The sequence spans 202 residues: Peptide deformylase 2 (202 aa).

Fe cation contacts are provided by Cys123 and His165. Glu166 is a catalytic residue. His169 contributes to the Fe cation binding site.

Belongs to the polypeptide deformylase family. Fe(2+) is required as a cofactor.

The catalysed reaction is N-terminal N-formyl-L-methionyl-[peptide] + H2O = N-terminal L-methionyl-[peptide] + formate. Its function is as follows. Removes the formyl group from the N-terminal Met of newly synthesized proteins. Requires at least a dipeptide for an efficient rate of reaction. N-terminal L-methionine is a prerequisite for activity but the enzyme has broad specificity at other positions. This Vibrio vulnificus (strain YJ016) protein is Peptide deformylase 2.